The following is a 363-amino-acid chain: Peptide chain release factor 1 (363 aa).

Gln-237 bears the N5-methylglutamine mark. The span at 284 to 296 (EDEKRRSAEESTR) shows a compositional bias: basic and acidic residues. Residues 284 to 305 (EDEKRRSAEESTRRSLVASGDR) form a disordered region.

It belongs to the prokaryotic/mitochondrial release factor family. In terms of processing, methylated by PrmC. Methylation increases the termination efficiency of RF1.

The protein localises to the cytoplasm. Peptide chain release factor 1 directs the termination of translation in response to the peptide chain termination codons UAG and UAA. This is Peptide chain release factor 1 from Shewanella baltica (strain OS185).